The sequence spans 475 residues: UDP-N-acetylmuramate--L-alanine ligase (475 aa).

121–127 (GTHGKTT) provides a ligand contact to ATP.

This sequence belongs to the MurCDEF family.

The protein resides in the cytoplasm. The enzyme catalyses UDP-N-acetyl-alpha-D-muramate + L-alanine + ATP = UDP-N-acetyl-alpha-D-muramoyl-L-alanine + ADP + phosphate + H(+). The protein operates within cell wall biogenesis; peptidoglycan biosynthesis. Functionally, cell wall formation. This chain is UDP-N-acetylmuramate--L-alanine ligase, found in Salinibacter ruber (strain DSM 13855 / M31).